Reading from the N-terminus, the 551-residue chain is Calcium-dependent protein kinase 19 (551 aa).

Gly2 carries the N-myristoyl glycine lipid modification. The disordered stretch occupies residues 12 to 46 (VKKPTPDISGEQNTEVKSREITPKEQPRQRQPAPR). Residues 25-39 (TEVKSREITPKEQPR) show a composition bias toward basic and acidic residues. Residues 98-357 (YSLGRELGRG…AAQVLEHPWI (260 aa)) enclose the Protein kinase domain. ATP-binding positions include 104–112 (LGRGQFGIT) and Lys127. The Proton acceptor role is filled by Asp222. Ser263 bears the Phosphoserine mark. The autoinhibitory domain stretch occupies residues 363-393 (ASDKPIDSAVLSRMKQLRAMNKLKKLAFKFI). EF-hand domains follow at residues 400-435 (EELK…LGSR), 436-471 (LTET…RFRV), 472-507 (ERED…YNMG), and 512-542 (IKEI…CSQS). Asp413, Asp415, Ser417, Thr419, Glu424, Asp449, Asp451, Asn453, Thr455, Glu460, Asp485, Asp487, Ser489, Glu496, Asp520, Asp522, Asp524, Ser526, and Glu531 together coordinate Ca(2+).

This sequence belongs to the protein kinase superfamily. Ser/Thr protein kinase family. CDPK subfamily.

It is found in the membrane. It carries out the reaction L-seryl-[protein] + ATP = O-phospho-L-seryl-[protein] + ADP + H(+). The enzyme catalyses L-threonyl-[protein] + ATP = O-phospho-L-threonyl-[protein] + ADP + H(+). Activated by calcium. Autophosphorylation may play an important role in the regulation of the kinase activity. Its function is as follows. May play a role in signal transduction pathways that involve calcium as a second messenger. The chain is Calcium-dependent protein kinase 19 (CPK19) from Arabidopsis thaliana (Mouse-ear cress).